The primary structure comprises 140 residues: Hemoglobin subunit alpha (140 aa).

The 140-residue stretch at 1–140 (LSAADKGHVK…VSTVLTSKYR (140 aa)) folds into the Globin domain. S2 is modified (phosphoserine). Residues K6 and K10 each carry the N6-succinyllysine modification. K15 carries the N6-acetyllysine; alternate modification. N6-succinyllysine; alternate is present on K15. Y23 carries the phosphotyrosine modification. S34 carries the phosphoserine modification. K39 is subject to N6-succinyllysine. S48 is modified (phosphoserine). H57 provides a ligand contact to O2. H86 contacts heme b. A Phosphoserine modification is found at S101. Phosphothreonine is present on T107. Residue S123 is modified to Phosphoserine. A phosphothreonine mark is found at T133 and T136. Residue S137 is modified to Phosphoserine.

This sequence belongs to the globin family. In terms of assembly, heterotetramer of two alpha chains and two beta chains. As to expression, red blood cells.

Its function is as follows. Involved in oxygen transport from the lung to the various peripheral tissues. Functionally, hemopressin acts as an antagonist peptide of the cannabinoid receptor CNR1. Hemopressin-binding efficiently blocks cannabinoid receptor CNR1 and subsequent signaling. This is Hemoglobin subunit alpha (HBA) from Tragelaphus strepsiceros (Greater kudu).